Consider the following 433-residue polypeptide: Serine hydroxymethyltransferase (433 aa).

121-123 (AHV) provides a ligand contact to (6S)-5,6,7,8-tetrahydrofolate. Lys227 carries the N6-(pyridoxal phosphate)lysine modification. Position 243 (Glu243) interacts with (6S)-5,6,7,8-tetrahydrofolate.

The protein belongs to the SHMT family. Homodimer. Pyridoxal 5'-phosphate is required as a cofactor.

Its subcellular location is the cytoplasm. It carries out the reaction 5,10-methylenetetrahydrosulfopterin + glycine + H2O = tetrahydrosulfopterin + L-serine. It functions in the pathway amino-acid biosynthesis; glycine biosynthesis; glycine from L-serine: step 1/1. Its activity is regulated as follows. Is completely inhibited by addition of NaCNBH(3) in vitro; this reagent is a known inhibitor of PLP enzymes, that reduces the internal aldimine of PLP to the catalytically inactive and stable secondary amine. Is also inhibited by L-cysteine, which forms a thiazolidine complex with the active site PLP. In terms of biological role, catalyzes the reversible interconversion of serine and glycine with the modified folate sulfopterin serving as the one-carbon carrier. Cannot use tetrahydrofolate (THF or H4PteGlu) as the pteridine substrate. Also exhibits a pteridine-independent aldolase activity toward beta-hydroxyamino acids, producing glycine and aldehydes, via a retro-aldol mechanism. Thus, is able to catalyze the cleavage of both allo-threonine and beta-phenylserine. The protein is Serine hydroxymethyltransferase of Saccharolobus solfataricus (strain ATCC 35092 / DSM 1617 / JCM 11322 / P2) (Sulfolobus solfataricus).